The following is a 197-amino-acid chain: MAKNGLVIYILVITLLLDQTSCHASKFKARKHSKRRVKEKDGDLKTQVEKLWREVNALKEMQALQTVCLRGTKFHKKCYLAAEGLKHFHEANEDCISKGGTLVVPRSADEINALRDYGKRSLPGVNDFWLGINDMVAEGKFVDINGLAISFLNWDQAQPNGGKRENCALFSQSAQGKWSDEACHSSKRYICEFTIPQ.

The first 24 residues, 1-24 (MAKNGLVIYILVITLLLDQTSCHA), serve as a signal peptide directing secretion. 3 disulfides stabilise this stretch: C68–C78, C95–C191, and C167–C183. A C-type lectin domain is found at 74–192 (FHKKCYLAAE…CHSSKRYICE (119 aa)).

It is found in the secreted. Promotes cell adhesion to laminin and fibronectin. This chain is C-type lectin domain family 3 member A (CLEC3A), found in Bos taurus (Bovine).